The chain runs to 297 residues: F-box only protein 2 (297 aa).

A disordered region spans residues 1 to 42; the sequence is MDGDGDPESVGQPEEASPEEQQEEACAEEANGGEERPEDDGE. Residues 16 to 27 are compositionally biased toward acidic residues; it reads ASPEEQQEEACA. The F-box domain maps to 45–92; that stretch reads AAYLDELPEPLLLRVLAELPAAQLVQACRLVCLRWKELVDGAPLWLLK. The region spanning 114–297 is the FBA domain; it reads FYFLSKRRRN…VTNSSVWVEP (184 aa). Residues 211–213 and 279–280 each bind a carbohydrate; these read RRD and YW.

In terms of assembly, component of the SCF(FBXO2) complex consisting of CUL1, RBX1, SKP1 and FBXO2. Predominantly detected as heterodimer with SKP1; the heterodimer with SKP1 is not part of the SCF(FBXO2) complex.

It is found in the cytoplasm. Its subcellular location is the microsome membrane. Its pathway is protein modification; protein ubiquitination. Its function is as follows. Substrate recognition component of a SCF (SKP1-CUL1-F-box protein) E3 ubiquitin-protein ligase complex that mediates the ubiquitination and subsequent proteasomal degradation of target proteins. Involved in the endoplasmic reticulum-associated degradation pathway (ERAD) for misfolded lumenal proteins by recognizing and binding sugar chains on unfolded glycoproteins that are retrotranslocated into the cytosol and promoting their ubiquitination and subsequent degradation. Prevents formation of cytosolic aggregates of unfolded glycoproteins that have been retrotranslocated into the cytosol. Able to recognize and bind denatured glycoproteins, preferentially those of the high-mannose type. The chain is F-box only protein 2 (FBXO2) from Bos taurus (Bovine).